Consider the following 145-residue polypeptide: MIGLIQRVSRAKVTVADELVGSIGPGLLILLGVEHKDDEASAAKLAQRIANYRVFSDVEDKMNNSVIDAQGEVLVVSQFTLAADTRKGRRPSFSSAATPDQAQHLYQVFCEQMAAQGLPVKTGRFAADMQVELVNDGPVTFELKV.

Positions 137–138 (GP) match the Gly-cisPro motif, important for rejection of L-amino acids motif.

It belongs to the DTD family. In terms of assembly, homodimer.

The protein resides in the cytoplasm. The enzyme catalyses glycyl-tRNA(Ala) + H2O = tRNA(Ala) + glycine + H(+). The catalysed reaction is a D-aminoacyl-tRNA + H2O = a tRNA + a D-alpha-amino acid + H(+). In terms of biological role, an aminoacyl-tRNA editing enzyme that deacylates mischarged D-aminoacyl-tRNAs. Also deacylates mischarged glycyl-tRNA(Ala), protecting cells against glycine mischarging by AlaRS. Acts via tRNA-based rather than protein-based catalysis; rejects L-amino acids rather than detecting D-amino acids in the active site. By recycling D-aminoacyl-tRNA to D-amino acids and free tRNA molecules, this enzyme counteracts the toxicity associated with the formation of D-aminoacyl-tRNA entities in vivo and helps enforce protein L-homochirality. The chain is D-aminoacyl-tRNA deacylase from Idiomarina loihiensis (strain ATCC BAA-735 / DSM 15497 / L2-TR).